The sequence spans 523 residues: Putative F-box protein At1g30925 (523 aa).

One can recognise an F-box domain in the interval 4–44 (FPNDDLVYEILLRLPAKSVARCSCVSKLRRSILSRQDFTEL).

This chain is Putative F-box protein At1g30925, found in Arabidopsis thaliana (Mouse-ear cress).